A 285-amino-acid polypeptide reads, in one-letter code: Flagellar filament 30.7 kDa core protein (285 aa).

The protein belongs to the bacterial flagellin family. The core of the flagellum consists of several antigenically related polypeptides. Post-translationally, glycosylated. Glycosylation is not essential for motility.

The protein localises to the periplasmic flagellum. The protein resides in the periplasm. In terms of biological role, component of the core of the flagella. This Treponema maltophilum protein is Flagellar filament 30.7 kDa core protein (flaB3).